We begin with the raw amino-acid sequence, 160 residues long: Major pollen allergen Bet v 1-B (160 aa).

The brassinolide site is built by Lys-55, Tyr-82, Tyr-84, and Asn-101.

Belongs to the BetVI family.

It localises to the cytoplasm. In terms of biological role, may be a general steroid carrier protein. In Betula pendula (European white birch), this protein is Major pollen allergen Bet v 1-B (BETV1B).